The following is a 48-amino-acid chain: MCISIDIERKKKSNIYINLYINMKILIYISLVFNNLSALIDKHIISYK.

The protein localises to the plastid. It is found in the cyanelle. This is an uncharacterized protein from Cyanophora paradoxa.